The primary structure comprises 368 residues: G kinase-anchoring protein 1 (368 aa).

Disordered stretches follow at residues 18–127 (LQVD…WKQR), 152–260 (EEHK…VRTE), and 333–368 (LHTA…EGDV). The span at 33 to 56 (PKAAGRGAGKPRSGKSPSGKNSQN) shows a compositional bias: low complexity. Residues 52–82 (KNSQNNEKKKEKRRRKKEQQQSEANELRSLA) are a coiled coil. Polar residues-rich tracts occupy residues 88 to 100 (QKST…TLQD) and 109 to 121 (ANVQ…QENW). A compositionally biased stretch (basic and acidic residues) spans 152-162 (EEHKKDADKAE). Residues 170–180 (TGGKKDRKKNQ) show a composition bias toward basic residues. The segment covering 194-238 (FQQEDQLKNKPEREPVNPALRDDKFFNKLEDDVSKIVQRDKRREQ) has biased composition (basic and acidic residues). Residues 239-250 (YSNSAGQEVNTS) show a composition bias toward polar residues. Basic and acidic residues predominate over residues 251–260 (SEHEQDVRTE). Positions 256 to 350 (DVRTEQLKYE…RSKVKGLQSE (95 aa)) form a coiled coil.

It belongs to the GKAP1 family.

Its subcellular location is the golgi apparatus. Functionally, may play a role in the regulation of insulin-dependent IRS1 tyrosine phosphorylation in adipocytes. The protein is G kinase-anchoring protein 1 (gkap1) of Danio rerio (Zebrafish).